The following is a 238-amino-acid chain: Enolase-phosphatase E1 (238 aa).

Residues Asp-14 and Glu-16 each coordinate Mg(2+). Residues 128–129 (SS) and Lys-165 each bind substrate. A Mg(2+)-binding site is contributed by Asp-192.

The protein belongs to the HAD-like hydrolase superfamily. MasA/MtnC family. Monomer. Mg(2+) serves as cofactor.

It localises to the cytoplasm. Its subcellular location is the nucleus. The catalysed reaction is 5-methylsulfanyl-2,3-dioxopentyl phosphate + H2O = 1,2-dihydroxy-5-(methylsulfanyl)pent-1-en-3-one + phosphate. It functions in the pathway amino-acid biosynthesis; L-methionine biosynthesis via salvage pathway; L-methionine from S-methyl-5-thio-alpha-D-ribose 1-phosphate: step 3/6. Its pathway is amino-acid biosynthesis; L-methionine biosynthesis via salvage pathway; L-methionine from S-methyl-5-thio-alpha-D-ribose 1-phosphate: step 4/6. Functionally, bifunctional enzyme that catalyzes the enolization of 2,3-diketo-5-methylthiopentyl-1-phosphate (DK-MTP-1-P) into the intermediate 2-hydroxy-3-keto-5-methylthiopentenyl-1-phosphate (HK-MTPenyl-1-P), which is then dephosphorylated to form the acireductone 1,2-dihydroxy-3-keto-5-methylthiopentene (DHK-MTPene). The protein is Enolase-phosphatase E1 of Fusarium vanettenii (strain ATCC MYA-4622 / CBS 123669 / FGSC 9596 / NRRL 45880 / 77-13-4) (Fusarium solani subsp. pisi).